The chain runs to 268 residues: Ribosomal RNA small subunit methyltransferase A (268 aa).

Residues Asn-23, Ile-25, Gly-50, Glu-72, Asp-97, and Asn-116 each contribute to the S-adenosyl-L-methionine site.

This sequence belongs to the class I-like SAM-binding methyltransferase superfamily. rRNA adenine N(6)-methyltransferase family. RsmA subfamily.

The protein localises to the cytoplasm. The catalysed reaction is adenosine(1518)/adenosine(1519) in 16S rRNA + 4 S-adenosyl-L-methionine = N(6)-dimethyladenosine(1518)/N(6)-dimethyladenosine(1519) in 16S rRNA + 4 S-adenosyl-L-homocysteine + 4 H(+). Functionally, specifically dimethylates two adjacent adenosines (A1518 and A1519) in the loop of a conserved hairpin near the 3'-end of 16S rRNA in the 30S particle. May play a critical role in biogenesis of 30S subunits. In Rickettsia prowazekii (strain Madrid E), this protein is Ribosomal RNA small subunit methyltransferase A.